The following is a 1146-amino-acid chain: MLNVNANSLIYPFSGQITDIRKNQFIPTSKFINTVINEPIFLTKQKVRTKPGTSHAPRKILEVNPSWNNTFFNWNTALRNPSTVLPSFIYERTESSTSKKSHDQETNQVLINAEILNRKLPQFIKQKFGYIDKRKGGYVNQFGFWALLYSEFCLKLNVPIEYYISMLNLKTQDNNIFLREYNEVEYALRYLVRFDELIYTNGKGRKFIKLPSSGKLDFSVDVEEIENVIGCDLHYWTLWPLSNTYTVQGSGILNHGNIVRGICEFTNELVAAHYYPTYFYEHYLYFEDVSNLIKHQIYNVIRTYKAQLKLQDNLGTNRLERRGYYLTMFCPFFEKYKYSVVDQFGELYLYLNMFGALPFDSADSKSIPKTYNDFDIYYQDRFKNFKDFGYVTYNTTIPNEYKRRNLGPYQLFFTYQQMFDLIQTISTNVNLMYNFKILGFNMMDISNINEIDTNVTSVCRNIEYPLGPSLHLNNLEAIPPNLLELANNVTMQFNSNFLSPYSMYTLPLMRSSAERLIQEDGLRLAVFRLSTAHRKQLKTLQKQVLDPKVLFDRFIRPNLIRCQIPKFEFLFWITYCVDEFPMYTISSTGDLDVTPLTSSDEKRKSSVTNNSSFKLLCMAFQFLSEFGIREIVKPNSVLFLGAKNEPVGDMLRRLSHGLWSVQRVGADAEYPSKKANINNVNLKNTYDLVISDMDQSTGTTVEAISALCVSQLKKCIECFNRRLVFKIQYGLFHTLCAIRDCLIECGQDYAGQNLYFNMKIVRSCWSKVGSMELFLILDKTKTEHELYTVDQLRAVVNSFGFSETNTVFYTYMGTPSRYQLNDLNCKIFSVDVTVNEFSDVLSTFMNLSNCVSYGALKNEAYVDTLTIFGATNIQRIGLFMRNKQIYKSLALDGKDHRPEGIFDPRKCFVIPGAREVLILSDAQRMKAWKILKKMHFDRAVLDTSLTIYDIGCRDFECAYLAVMDEDTILPYVGIDKSTILDVKRNLTIERREVNRTELYRLATLGHVFVYNSYFMDFPTRAKLEEELNYLYDNLVLKGVMLMSFYCLHDELLPVLKDHGFVDISSKDVKENKFSFGRYHGFGTVDYNFMLEWLTKMSQKFEVHTVILSASDISFSCVMHGNAINLDSIYFAPIFNMVQPCFLIKNK.

This is an uncharacterized protein from Saccharum officinarum (Sugarcane).